The primary structure comprises 191 residues: Large ribosomal subunit protein bL9 (191 aa).

The disordered stretch occupies residues 149 to 191 (EEAERQSKGESLTSADAIYGVDEDALRPEDFFDPEADGNEDDE). Positions 179–191 (FFDPEADGNEDDE) are enriched in acidic residues.

The protein belongs to the bacterial ribosomal protein bL9 family.

Functionally, binds to the 23S rRNA. This Agrobacterium fabrum (strain C58 / ATCC 33970) (Agrobacterium tumefaciens (strain C58)) protein is Large ribosomal subunit protein bL9 (rplI).